We begin with the raw amino-acid sequence, 303 residues long: tRNA pseudouridine synthase B (303 aa).

Catalysis depends on aspartate 53, which acts as the Nucleophile.

The protein belongs to the pseudouridine synthase TruB family. Type 1 subfamily.

It carries out the reaction uridine(55) in tRNA = pseudouridine(55) in tRNA. Responsible for synthesis of pseudouridine from uracil-55 in the psi GC loop of transfer RNAs. The polypeptide is tRNA pseudouridine synthase B (Zymomonas mobilis subsp. mobilis (strain ATCC 31821 / ZM4 / CP4)).